A 58-amino-acid polypeptide reads, in one-letter code: Potassium channel toxin Ts16 (58 aa).

Residues 1 to 16 (MHSSVFILILFSLAVI) form the signal peptide. Intrachain disulfides connect Cys-29-Cys-51, Cys-34-Cys-47, and Cys-38-Cys-53.

In terms of tissue distribution, expressed by the venom gland.

Its subcellular location is the secreted. Blocks potassium channels. The protein is Potassium channel toxin Ts16 of Tityus serrulatus (Brazilian scorpion).